A 314-amino-acid polypeptide reads, in one-letter code: MSLLDWFAERRKQTSLNLTGSSPFDKERQVREIADGLWQKCPACDALTYTKDLQQNWQVCPSCGYHHRITAPQRLQQLLDPGSWQPLDEHLAPTDPLHFFDQKPYAERLASYQERTQLKDAVLTGLGSLEGIPVAMGVMDFRFMGGSMGSVVGEKITRLTERATRDHLPLVIFSASGGARMQEGILSLMQMAKTAAALQRHREAGQLFISVLTHPTYGGVTASFAMLGDLILAEPGAQVGFAGPNVIEQTIGKGKLPEGFQTAEYLLAHGLIDAIVPRTELRRRLAQLLAMHRPRLRMSLPALEPTYALDPARI.

Residues 37–307 (LWQKCPACDA…MSLPALEPTY (271 aa)) enclose the CoA carboxyltransferase N-terminal domain. Residues Cys-41, Cys-44, Cys-60, and Cys-63 each coordinate Zn(2+). The C4-type zinc-finger motif lies at 41–63 (CPACDALTYTKDLQQNWQVCPSC).

This sequence belongs to the AccD/PCCB family. In terms of assembly, acetyl-CoA carboxylase is a heterohexamer composed of biotin carboxyl carrier protein (AccB), biotin carboxylase (AccC) and two subunits each of ACCase subunit alpha (AccA) and ACCase subunit beta (AccD). The cofactor is Zn(2+).

The protein resides in the cytoplasm. It carries out the reaction N(6)-carboxybiotinyl-L-lysyl-[protein] + acetyl-CoA = N(6)-biotinyl-L-lysyl-[protein] + malonyl-CoA. Its pathway is lipid metabolism; malonyl-CoA biosynthesis; malonyl-CoA from acetyl-CoA: step 1/1. Its function is as follows. Component of the acetyl coenzyme A carboxylase (ACC) complex. Biotin carboxylase (BC) catalyzes the carboxylation of biotin on its carrier protein (BCCP) and then the CO(2) group is transferred by the transcarboxylase to acetyl-CoA to form malonyl-CoA. This is Acetyl-coenzyme A carboxylase carboxyl transferase subunit beta from Synechococcus sp. (strain JA-3-3Ab) (Cyanobacteria bacterium Yellowstone A-Prime).